We begin with the raw amino-acid sequence, 87 residues long: Small ribosomal subunit protein uS15 (87 aa).

It belongs to the universal ribosomal protein uS15 family. In terms of assembly, part of the 30S ribosomal subunit. Forms a bridge to the 50S subunit in the 70S ribosome, contacting the 23S rRNA.

Functionally, one of the primary rRNA binding proteins, it binds directly to 16S rRNA where it helps nucleate assembly of the platform of the 30S subunit by binding and bridging several RNA helices of the 16S rRNA. Its function is as follows. Forms an intersubunit bridge (bridge B4) with the 23S rRNA of the 50S subunit in the ribosome. This is Small ribosomal subunit protein uS15 from Cutibacterium acnes (strain DSM 16379 / KPA171202) (Propionibacterium acnes).